The sequence spans 187 residues: Capsid protein (187 aa).

Residues 150–187 (RRGGARASRSPRRRTPSPRRRRSQSPRRRRSQSPSANC) are disordered. The segment covering 158 to 180 (RSPRRRTPSPRRRRSQSPRRRRS) has biased composition (basic residues). Residues Ser159, Ser166, and Ser174 each carry the phosphoserine; by host modification. The 1; half-length repeat unit spans residues 159–165 (SPRRRTP). Residues 159–181 (SPRRRTPSPRRRRSQSPRRRRSQ) form a 3 X 8 AA repeats of S-P-R-R-R-[PR]-S-Q region. A Bipartite nuclear localization signal motif is present at residues 162–179 (RRTPSPRRRRSQSPRRRR). 2 tandem repeats follow at residues 166-173 (SPRRRRSQ) and 174-181 (SPRRRRSQ). Positions 181–187 (QSPSANC) are RNA binding.

This sequence belongs to the orthohepadnavirus core antigen family. Homodimerizes, then multimerizes. Interacts with cytosol exposed regions of viral L glycoprotein present in the reticulum-to-Golgi compartment. Interacts with human FLNB. Phosphorylated form interacts with host importin alpha; this interaction depends on the exposure of the NLS, which itself depends upon genome maturation and/or phosphorylation of the capsid protein. Interacts with host NUP153. Phosphorylated by host SRPK1, SRPK2, and maybe protein kinase C or GAPDH. Phosphorylation is critical for pregenomic RNA packaging. Protein kinase C phosphorylation is stimulated by HBx protein and may play a role in transport of the viral genome to the nucleus at the late step during the viral replication cycle.

It is found in the virion. Its subcellular location is the host cytoplasm. Functionally, self assembles to form an icosahedral capsid. Most capsids appear to be large particles with an icosahedral symmetry of T=4 and consist of 240 copies of capsid protein, though a fraction forms smaller T=3 particles consisting of 180 capsid proteins. Entering capsids are transported along microtubules to the nucleus. Phosphorylation of the capsid is thought to induce exposure of nuclear localization signal in the C-terminal portion of the capsid protein that allows binding to the nuclear pore complex via the importin (karyopherin-) alpha and beta. Capsids are imported in intact form through the nuclear pore into the nuclear basket, where it probably binds NUP153. Only capsids that contain the mature viral genome can release the viral DNA and capsid protein into the nucleoplasm. Immature capsids get stuck in the basket. Capsids encapsulate the pre-genomic RNA and the P protein. Pre-genomic RNA is reverse-transcribed into DNA while the capsid is still in the cytoplasm. The capsid can then either be directed to the nucleus, providing more genomes for transcription, or bud through the endoplasmic reticulum to provide new virions. This Marmota monax (Woodchuck) protein is Capsid protein.